The primary structure comprises 161 residues: Troponin C, slow skeletal and cardiac muscles (161 aa).

An N-acetylmethionine modification is found at M1. 4 consecutive EF-hand domains span residues Q16–N51, P52–D87, K92–T127, and I128–E161. Residues D65, D67, S69, T71, D105, N107, D109, Y111, E116, N143, D145, R147, and E152 each coordinate Ca(2+).

The protein belongs to the troponin C family.

Its function is as follows. Troponin is the central regulatory protein of striated muscle contraction. Tn consists of three components: Tn-I which is the inhibitor of actomyosin ATPase, Tn-T which contains the binding site for tropomyosin and Tn-C. The binding of calcium to Tn-C abolishes the inhibitory action of Tn on actin filaments. The chain is Troponin C, slow skeletal and cardiac muscles (TNNC1) from Coturnix japonica (Japanese quail).